The sequence spans 245 residues: MVPWLGPDDPFPPVERALSAASGAPGLLAASADLLPSRLIDAYRRGIFPWYSDGQPVLWWTPDPRMILRPREFKISPSLKKTLRRVLRDDTWEIRVDADFPAVMRACALAPRHGQRGTWITSDVIDAYSTLHRRGEAHSIETWHAGKRVGGLYGVSFGKMFFGESMYAEVTDASKIALSALVFHLRRHEIEMIDCQQNTSHLASLGGREIARKAFVAHVRAAVDSAPIPWSFDKSVLRDLLAPAQ.

It belongs to the L/F-transferase family.

The protein localises to the cytoplasm. The enzyme catalyses N-terminal L-lysyl-[protein] + L-leucyl-tRNA(Leu) = N-terminal L-leucyl-L-lysyl-[protein] + tRNA(Leu) + H(+). It catalyses the reaction N-terminal L-arginyl-[protein] + L-leucyl-tRNA(Leu) = N-terminal L-leucyl-L-arginyl-[protein] + tRNA(Leu) + H(+). It carries out the reaction L-phenylalanyl-tRNA(Phe) + an N-terminal L-alpha-aminoacyl-[protein] = an N-terminal L-phenylalanyl-L-alpha-aminoacyl-[protein] + tRNA(Phe). Functions in the N-end rule pathway of protein degradation where it conjugates Leu, Phe and, less efficiently, Met from aminoacyl-tRNAs to the N-termini of proteins containing an N-terminal arginine or lysine. This Paraburkholderia phymatum (strain DSM 17167 / CIP 108236 / LMG 21445 / STM815) (Burkholderia phymatum) protein is Leucyl/phenylalanyl-tRNA--protein transferase.